A 251-amino-acid chain; its full sequence is Capsid protein (251 aa).

The segment at 1 to 27 is disordered; that stretch reads MPKRDLPWRSMPGTSKTSRNANYSPRA. The short motif at 3–20 is the Bipartite nuclear localization signal element; that stretch reads KRDLPWRSMPGTSKTSRN. The span at 12-23 shows a compositional bias: polar residues; it reads PGTSKTSRNANY. Positions 35–49 match the Nuclear localization signal motif; the sequence is KASEWVHRPMYRKPR. A zinc finger lies at 63–80; that stretch reads CEGPCKVQSYEQRHDISH. The Nuclear export signal signature appears at 96–117; the sequence is ITHRVGKRFCVKSVYILGKIWM. Positions 195-242 match the Bipartite nuclear localization signal motif; that stretch reads KRFWKVNNHVVYNHQEAGKYENHTENALLLYMACTHASNPVYATLKIR.

It belongs to the geminiviridae capsid protein family. As to quaternary structure, homomultimer. Binds to single-stranded and double-stranded viral DNA. Interacts (via nuclear localization signals) with host importin alpha-1a.

Its subcellular location is the virion. The protein localises to the host nucleus. In terms of biological role, encapsidates the viral DNA into characteristic twinned ('geminate') particles. Binds the genomic viral ssDNA and shuttles it into and out of the cell nucleus. The CP of bipartite geminiviruses is not required for cell-to-cell or systemic movement. The chain is Capsid protein from Abutilon (Upland cotton).